The primary structure comprises 132 residues: Small ribosomal subunit protein uS8 (132 aa).

The protein belongs to the universal ribosomal protein uS8 family. In terms of assembly, part of the 30S ribosomal subunit. Contacts proteins S5 and S12.

In terms of biological role, one of the primary rRNA binding proteins, it binds directly to 16S rRNA central domain where it helps coordinate assembly of the platform of the 30S subunit. The protein is Small ribosomal subunit protein uS8 of Mycolicibacterium vanbaalenii (strain DSM 7251 / JCM 13017 / BCRC 16820 / KCTC 9966 / NRRL B-24157 / PYR-1) (Mycobacterium vanbaalenii).